A 418-amino-acid chain; its full sequence is Delta(14)-sterol reductase TM7SF2 (418 aa).

6 helical membrane-spanning segments follow: residues 13–35 (FGGP…HLLL), 62–81 (ALLL…LLPA), 102–124 (GFQA…LPLS), 129–148 (MLLP…SLLL), 255–277 (FGFM…QAQF), and 287–304 (WPLA…YYIF). NADP(+) is bound by residues Lys311, Arg315, Leu338, Trp343, and 350–351 (NY). Residues 355 to 377 (LIMALAWSLPCGVFHLLPYFYFL) form a helical membrane-spanning segment. NADP(+) is bound by residues Asp390, 394–398 (CRQKY), and Tyr405.

The protein belongs to the ERG4/ERG24 family. In terms of tissue distribution, highly expressed in liver and brain.

The protein localises to the microsome membrane. It localises to the endoplasmic reticulum membrane. It carries out the reaction 4,4-dimethyl-5alpha-cholesta-8,24-dien-3beta-ol + NADP(+) = 4,4-dimethyl-5alpha-cholesta-8,14,24-trien-3beta-ol + NADPH + H(+). The catalysed reaction is 5alpha-cholest-8,14-dien-3beta-ol + NADPH + H(+) = 5alpha-cholest-8-en-3beta-ol + NADP(+). It catalyses the reaction 4,4-dimethyl-8,14-cholestadien-3beta-ol + NADPH + H(+) = 4,4-dimethyl-5alpha-cholest-8-en-3beta-ol + NADP(+). The protein operates within steroid biosynthesis; cholesterol biosynthesis. Functionally, catalyzes the reduction of the C14-unsaturated bond of lanosterol, as part of the metabolic pathway leading to cholesterol biosynthesis. The sequence is that of Delta(14)-sterol reductase TM7SF2 (TM7SF2) from Bos taurus (Bovine).